Consider the following 1428-residue polypeptide: DNA-directed RNA polymerase subunit beta' (1428 aa).

Residues Cys-66, Cys-68, Cys-81, and Cys-84 each coordinate Zn(2+). The Mg(2+) site is built by Asp-472, Asp-474, and Asp-476. Residues Cys-816, Cys-890, Cys-897, and Cys-900 each coordinate Zn(2+).

This sequence belongs to the RNA polymerase beta' chain family. The RNAP catalytic core consists of 2 alpha, 1 beta, 1 beta' and 1 omega subunit. When a sigma factor is associated with the core the holoenzyme is formed, which can initiate transcription. It depends on Mg(2+) as a cofactor. Zn(2+) serves as cofactor.

It catalyses the reaction RNA(n) + a ribonucleoside 5'-triphosphate = RNA(n+1) + diphosphate. In terms of biological role, DNA-dependent RNA polymerase catalyzes the transcription of DNA into RNA using the four ribonucleoside triphosphates as substrates. The chain is DNA-directed RNA polymerase subunit beta' from Phocaeicola vulgatus (strain ATCC 8482 / DSM 1447 / JCM 5826 / CCUG 4940 / NBRC 14291 / NCTC 11154) (Bacteroides vulgatus).